The chain runs to 188 residues: MILIVGLGNPGKQYEKTRHNIGFDVIDYMANKYNIDVNREKFKGICGEGFIENKKVILLKPLTYMNLSGESIREFVNFYKLEDDEIIVVYDDISLDIGRLRIREKGSAGGHNGIKSIIQNLGGDKFPRVKVGVGQPKDNLVNHVLGKFSKEDREHIEKVIPVVSDAIVEIVKNDAKESMNKFNGVNIE.

Tyrosine 14 provides a ligand contact to tRNA. Histidine 19 serves as the catalytic Proton acceptor. 3 residues coordinate tRNA: tyrosine 64, asparagine 66, and asparagine 112.

This sequence belongs to the PTH family. In terms of assembly, monomer.

The protein localises to the cytoplasm. The catalysed reaction is an N-acyl-L-alpha-aminoacyl-tRNA + H2O = an N-acyl-L-amino acid + a tRNA + H(+). Hydrolyzes ribosome-free peptidyl-tRNAs (with 1 or more amino acids incorporated), which drop off the ribosome during protein synthesis, or as a result of ribosome stalling. Functionally, catalyzes the release of premature peptidyl moieties from peptidyl-tRNA molecules trapped in stalled 50S ribosomal subunits, and thus maintains levels of free tRNAs and 50S ribosomes. The chain is Peptidyl-tRNA hydrolase from Clostridium perfringens (strain SM101 / Type A).